The primary structure comprises 974 residues: MAQFYYKRNVNAPYRDRIPLRIVRAESELSPSEKAYLNAVEKGDYASVKKSLEEAEIYFKININCIDPLGRTALLIAIENENLELIELLLSFNVYVGDALLHAIRKEVVGAVELLLNHKKPSGEKQVPPILLDKQFSEFTPDITPIILAAHTNNYEIIKLLVQKGVSVPRPHEVRCNCVECVSSSDVDSLRHSRSRLNIYKALASPSLIALSSEDPFLTAFQLSWELQELSKVENEFKSEYEELSRQCKQFAKDLLDQTRSSRELEIILNYRDDNSLIEEQSGNDLARLKLAIKYRQKEFVAQPNCQQLLASRWYDEFPGWRRRHWAVKMVTCFIIGLLFPVFSVCYLIAPKSPLGLFIRKPFIKFICHTASYLTFLFLLLLASQHIDRSDLNRQGPPPTIVEWMILPWVLGFIWGEIKQMWDGGLQDYIHDWWNLMDFVMNSLYLATISLKIVAFVKYSALNPRESWDMWHPTLVAEALFAIANIFSSLRLISLFTANSHLGPLQISLGRMLLDILKFLFIYCLVLLAFANGLNQLYFYYEETKGLSCKGIRCEKQNNAFSTLFETLQSLFWSIFGLINLYVTNVKAQHEFTEFVGATMFGTYNVISLVVLLNMLIAMMNNSYQLIADHADIEWKFARTKLWMSYFEEGGTLPTPFNVIPSPKSLWYLVKWIWTHLCKKKMRRKPESFGTIGRRAADNLRRHHQYQEVMRNLVKRYVAAMIREAKTEEGLTEENVKELKQDISSFRFEVLGLLRGSKLSTIQSANAASSADSDEKSQSEGNGKDKRKNLSLFDLTTLIHPRSAAIASERHNLSNGSALVVQEPPREKQRKVNFVADIKNFGLFHRRSKQNAAEQNANQIFSVSEEITRQQAAGALERNIELESKGLASRGDRSIPGLNEQCVLVDHRERNTDTLGLQVGKRVCSTFKSEKVVVEDTVPIIPKEKHAHEEDSSIDYDLSPTDTAAHEDYVTTRL.

Residues 1 to 324 (MAQFYYKRNV…YDEFPGWRRR (324 aa)) are Cytoplasmic-facing. ANK repeat units lie at residues 29-60 (LSPS…IYFK), 71-93 (RTAL…LSFN), 96-118 (VGDA…LLNH), and 141-165 (PDIT…VQKG). The tract at residues 87–172 (ELLLSFNVYV…QKGVSVPRPH (86 aa)) is multimerization domain. Positions 172, 176, 178, and 181 each coordinate Zn(2+). Positions 223–260 (LSWELQELSKVENEFKSEYEELSRQCKQFAKDLLDQTR) form a coiled coil. The interval 254 to 304 (DLLDQTRSSRELEIILNYRDDNSLIEEQSGNDLARLKLAIKYRQKEFVAQP) is multimerization domain. Positions 325–359 (HWAVKMVTCFIIGLLFPVFSVCYLIAPKSPLGLFI) form an intramembrane region, discontinuously helical. Over 360–362 (RKP) the chain is Cytoplasmic. The chain crosses the membrane as a helical span at residues 363–383 (FIKFICHTASYLTFLFLLLLA). Residues 384–403 (SQHIDRSDLNRQGPPPTIVE) lie on the Extracellular side of the membrane. Residues 404 to 418 (WMILPWVLGFIWGEI) form a helical membrane-spanning segment. Residues E417, Q420, N435, and D438 each contribute to the Ca(2+) site. The Cytoplasmic portion of the chain corresponds to 419 to 432 (KQMWDGGLQDYIHD). A helical membrane pass occupies residues 433 to 453 (WWNLMDFVMNSLYLATISLKI). Residues 454–475 (VAFVKYSALNPRESWDMWHPTL) lie on the Extracellular side of the membrane. Residues 476–498 (VAEALFAIANIFSSLRLISLFTA) traverse the membrane as a helical segment. The Cytoplasmic portion of the chain corresponds to 499–511 (NSHLGPLQISLGR). Residues 512 to 534 (MLLDILKFLFIYCLVLLAFANGL) traverse the membrane as a helical segment. The Extracellular portion of the chain corresponds to 535 to 599 (NQLYFYYEET…HEFTEFVGAT (65 aa)). An intrachain disulfide couples C549 to C554. The chain crosses the membrane as a helical span at residues 600–620 (MFGTYNVISLVVLLNMLIAMM). Residues 615–974 (MLIAMMNNSY…AHEDYVTTRL (360 aa)) form an interaction with ITPR1, ITPR2 and ITPR3 region. Residues 621–974 (NNSYQLIADH…AHEDYVTTRL (354 aa)) lie on the Cytoplasmic side of the membrane. Positions 765-787 (ANAASSADSDEKSQSEGNGKDKR) are disordered. Positions 773–784 (SDEKSQSEGNGK) are enriched in basic and acidic residues. 2 positions are modified to phosphotyrosine; by FYN: Y956 and Y969. Positions 972–974 (TRL) are PDZ-binding domain.

This sequence belongs to the transient receptor (TC 1.A.4) family. STrpC subfamily. TRPC4 sub-subfamily. As to quaternary structure, homotetramer. Heterotetramer with TRPC1 and/or TRPC5. Forms a heteromeric ion channel with TRPC1, with a 1:3 TRPC1:TRPC4 stoichiometry. Interacts with TRPC4AP. Isoform alpha but not isoform beta interacts with ITPR1, ITPR2 and ITPR3. Interacts with NHERF1. Interacts with MX1 and RNF24. Interacts (via CIRB domain) with SESTD1 (via the spectrin 1 repeat) and SPTBN5 (via C-terminus). Interacts with CDH5 and CTNNB1. Interacts (via protein 4.1-binding domain) with EPB41L2. Interacts with PLSCR1. Abundantly expressed in brain (hippocampal CA1 pyramidal neurons, dentate gyrus granule cells, and cerebral cortical neurons, and in the septal nuclei and the mitral layer of olfactory bulb). Lower levels are detected in other tissues.

The protein localises to the cell membrane. The catalysed reaction is Ca(2+)(in) = Ca(2+)(out). It carries out the reaction Na(+)(in) = Na(+)(out). The enzyme catalyses Li(+)(in) = Li(+)(out). It catalyses the reaction Cs(+)(in) = Cs(+)(out). With respect to regulation, may be operated by a phosphatidylinositol second messenger system activated by receptor tyrosine kinases or G-protein coupled receptors. May be activated by intracellular calcium store depletion. Functionally, forms a receptor-activated non-selective calcium permeant cation channel. Acts as a cell-cell contact-dependent endothelial calcium entry channel. Forms a homomeric ion channel or a heteromeric ion channel with TRPC1; the heteromeric ion channel has reduced calcium permeability compared to the homomeric channel. Also permeable to monovalent ions including sodium, lithium and cesium ions. The protein is Short transient receptor potential channel 4 (Trpc4) of Mus musculus (Mouse).